Here is a 224-residue protein sequence, read N- to C-terminus: 4'-phosphopantetheinyl transferase (224 aa).

Residues Asp-107, Glu-109, and Glu-151 each coordinate Mg(2+). Residues 158–189 form a peptidyl carrier protein binding region; that stretch reads GKGLSLPLDSFSVRLKDDGHVSIELPDGHEPC.

The protein belongs to the P-Pant transferase superfamily. Gsp/Sfp/HetI/AcpT family. Mg(2+) is required as a cofactor.

It catalyses the reaction apo-[peptidyl-carrier protein] + CoA = holo-[peptidyl-carrier protein] + adenosine 3',5'-bisphosphate + H(+). Functionally, may activate the peptidyl carrier protein (PCP) domains of surfactin synthetase SRF1/2/3 and iturin A synthetase, by transferring the 4'-phosphopantetheinyl moiety of coenzyme A (CoA) to a serine residue. Required for the coproduction of the lipopeptide antibiotics, iturin A and surfactin. The polypeptide is 4'-phosphopantetheinyl transferase (lpa-14) (Bacillus subtilis).